We begin with the raw amino-acid sequence, 109 residues long: A-type ATP synthase subunit F (109 aa).

The protein belongs to the V-ATPase F subunit family. Has multiple subunits with at least A(3), B(3), C, D, E, F, H, I and proteolipid K(x).

It is found in the cell membrane. Functionally, component of the A-type ATP synthase that produces ATP from ADP in the presence of a proton gradient across the membrane. The sequence is that of A-type ATP synthase subunit F from Haloquadratum walsbyi (strain DSM 16790 / HBSQ001).